The chain runs to 486 residues: tRNA-2-methylthio-N(6)-dimethylallyladenosine synthase (486 aa).

An MTTase N-terminal domain is found at 35–151; the sequence is RNLYVESYGC…LPRLLATVDS (117 aa). The [4Fe-4S] cluster site is built by Cys-44, Cys-80, Cys-114, Cys-189, Cys-193, and Cys-196. Residues 175-419 enclose the Radical SAM core domain; it reads NSNGVSAFIS…IDKQRQHSFE (245 aa). In terms of domain architecture, TRAM spans 422–485; sequence LKDIGKVYQV…TGTLLGEICT (64 aa).

It belongs to the methylthiotransferase family. MiaB subfamily. As to quaternary structure, monomer. [4Fe-4S] cluster is required as a cofactor.

It is found in the cytoplasm. The catalysed reaction is N(6)-dimethylallyladenosine(37) in tRNA + (sulfur carrier)-SH + AH2 + 2 S-adenosyl-L-methionine = 2-methylsulfanyl-N(6)-dimethylallyladenosine(37) in tRNA + (sulfur carrier)-H + 5'-deoxyadenosine + L-methionine + A + S-adenosyl-L-homocysteine + 2 H(+). Catalyzes the methylthiolation of N6-(dimethylallyl)adenosine (i(6)A), leading to the formation of 2-methylthio-N6-(dimethylallyl)adenosine (ms(2)i(6)A) at position 37 in tRNAs that read codons beginning with uridine. In Amoebophilus asiaticus (strain 5a2), this protein is tRNA-2-methylthio-N(6)-dimethylallyladenosine synthase.